Reading from the N-terminus, the 511-residue chain is Maturase K (511 aa).

Belongs to the intron maturase 2 family. MatK subfamily.

Its subcellular location is the plastid. It is found in the chloroplast. Usually encoded in the trnK tRNA gene intron. Probably assists in splicing its own and other chloroplast group II introns. This chain is Maturase K, found in Nandina domestica (Heavenly bamboo).